Reading from the N-terminus, the 508-residue chain is Photosystem II CP47 reaction center protein (508 aa).

6 helical membrane passes run 21 to 36, 101 to 115, 140 to 156, 203 to 218, 237 to 252, and 457 to 472; these read AVHL…WAGS, IILS…IWHW, GIHL…FGAF, IAAG…FHLS, VLSS…AFVV, and IFAL…HGAR.

The protein belongs to the PsbB/PsbC family. PsbB subfamily. As to quaternary structure, PSII is composed of 1 copy each of membrane proteins PsbA, PsbB, PsbC, PsbD, PsbE, PsbF, PsbH, PsbI, PsbJ, PsbK, PsbL, PsbM, PsbT, PsbY, PsbZ, Psb30/Ycf12, at least 3 peripheral proteins of the oxygen-evolving complex and a large number of cofactors. It forms dimeric complexes. Requires Binds multiple chlorophylls. PSII binds additional chlorophylls, carotenoids and specific lipids. as cofactor.

Its subcellular location is the plastid. The protein resides in the chloroplast thylakoid membrane. One of the components of the core complex of photosystem II (PSII). It binds chlorophyll and helps catalyze the primary light-induced photochemical processes of PSII. PSII is a light-driven water:plastoquinone oxidoreductase, using light energy to abstract electrons from H(2)O, generating O(2) and a proton gradient subsequently used for ATP formation. This Bigelowiella natans (Pedinomonas minutissima) protein is Photosystem II CP47 reaction center protein.